A 77-amino-acid chain; its full sequence is Conotoxin Bt6.6 (77 aa).

A signal peptide spans 1 to 19 (MEKLTILLLVAAVLMSTQA). Positions 20–38 (LIQSDGEKRQQAKINFLSX) are excised as a propeptide. 3 disulfides stabilise this stretch: Cys51/Cys65, Cys58/Cys69, and Cys64/Cys74.

It belongs to the conotoxin O2 superfamily. Expressed by the venom duct.

The protein resides in the secreted. The protein is Conotoxin Bt6.6 of Conus betulinus (Beech cone).